Reading from the N-terminus, the 90-residue chain is DNA-binding protein HU-alpha (90 aa).

Belongs to the bacterial histone-like protein family. As to quaternary structure, heterodimer of an alpha and a beta chain.

Its function is as follows. Histone-like DNA-binding protein which is capable of wrapping DNA to stabilize it, and thus to prevent its denaturation under extreme environmental conditions. The polypeptide is DNA-binding protein HU-alpha (hupA) (Vibrio cholerae serotype O1 (strain ATCC 39315 / El Tor Inaba N16961)).